The following is a 75-amino-acid chain: MARYFRRRKFCRFTAEGVVEIDYKDIATLKNYITESGKIVPSRITGTRAKYQRQLARAIKRARYLSLLPYTDRHQ.

The protein belongs to the bacterial ribosomal protein bS18 family. Part of the 30S ribosomal subunit. Forms a tight heterodimer with protein bS6.

Its function is as follows. Binds as a heterodimer with protein bS6 to the central domain of the 16S rRNA, where it helps stabilize the platform of the 30S subunit. This is Small ribosomal subunit protein bS18 from Pectobacterium atrosepticum (strain SCRI 1043 / ATCC BAA-672) (Erwinia carotovora subsp. atroseptica).